A 247-amino-acid polypeptide reads, in one-letter code: Uridylate kinase (247 aa).

18-21 contacts ATP; that stretch reads KLSG. Residue Gly-60 coordinates UMP. ATP-binding residues include Gly-61 and Arg-65. UMP is bound by residues Asp-80 and 141-148; that span reads TGNPFFTT. Residues Thr-168, Tyr-174, and Asp-177 each contribute to the ATP site.

Belongs to the UMP kinase family. As to quaternary structure, homohexamer.

It is found in the cytoplasm. The catalysed reaction is UMP + ATP = UDP + ADP. It participates in pyrimidine metabolism; CTP biosynthesis via de novo pathway; UDP from UMP (UMPK route): step 1/1. With respect to regulation, inhibited by UTP. Functionally, catalyzes the reversible phosphorylation of UMP to UDP. In Pseudomonas putida (strain ATCC 47054 / DSM 6125 / CFBP 8728 / NCIMB 11950 / KT2440), this protein is Uridylate kinase.